Reading from the N-terminus, the 252-residue chain is Chitooligosaccharide deacetylase (252 aa).

Residues histidine 61 and histidine 125 each coordinate Mg(2+).

This sequence belongs to the YdjC deacetylase family. ChbG subfamily. In terms of assembly, homodimer. The cofactor is Mg(2+).

Its subcellular location is the cytoplasm. It catalyses the reaction N,N'-diacetylchitobiose + H2O = N-acetyl-beta-D-glucosaminyl-(1-&gt;4)-D-glucosamine + acetate. The catalysed reaction is diacetylchitobiose-6'-phosphate + H2O = N'-monoacetylchitobiose-6'-phosphate + acetate. The protein operates within glycan degradation; chitin degradation. Involved in the degradation of chitin. ChbG is essential for growth on the acetylated chitooligosaccharides chitobiose and chitotriose but is dispensable for growth on cellobiose and chitosan dimer, the deacetylated form of chitobiose. Deacetylation of chitobiose-6-P and chitotriose-6-P is necessary for both the activation of the chb promoter by the regulatory protein ChbR and the hydrolysis of phosphorylated beta-glucosides by the phospho-beta-glucosidase ChbF. Catalyzes the removal of only one acetyl group from chitobiose-6-P to yield monoacetylchitobiose-6-P, the inducer of ChbR and the substrate of ChbF. In Shigella flexneri serotype 5b (strain 8401), this protein is Chitooligosaccharide deacetylase.